Consider the following 440-residue polypeptide: Mitochondrial translation factor 2 (440 aa).

A mitochondrion-targeting transit peptide spans 1–15; the sequence is MIRTSSILKNCNYRY.

The protein resides in the mitochondrion matrix. Required for the processing and/or for the stability of the CYTB and COX1 intron-containing pre-mRNAs and of the ATP6 transcript. Could be a stem-loop RNA-binding protein that plays a role in determining RNA stability. This Saccharomyces cerevisiae (strain ATCC 204508 / S288c) (Baker's yeast) protein is Mitochondrial translation factor 2 (MTF2).